The following is a 424-amino-acid chain: Glutamate-1-semialdehyde 2,1-aminomutase (424 aa).

Lys268 is subject to N6-(pyridoxal phosphate)lysine.

It belongs to the class-III pyridoxal-phosphate-dependent aminotransferase family. HemL subfamily. Requires pyridoxal 5'-phosphate as cofactor.

The protein localises to the cytoplasm. The catalysed reaction is (S)-4-amino-5-oxopentanoate = 5-aminolevulinate. Its pathway is porphyrin-containing compound metabolism; protoporphyrin-IX biosynthesis; 5-aminolevulinate from L-glutamyl-tRNA(Glu): step 2/2. This is Glutamate-1-semialdehyde 2,1-aminomutase from Methanosarcina acetivorans (strain ATCC 35395 / DSM 2834 / JCM 12185 / C2A).